The sequence spans 1141 residues: MAVRGEAAQDLAKPGLGGASPARVARGNHRHRGESSPSPRGSGCCWRALALQPLRRSPQLSSALCAGSLSVLLALLVRLVGGEVGGELEKSQEAAAEEEEEEGARGGVFPGPRGGAPGGGAQLSPWLQPAALLFSLLCAFFWMGLCLLRAGVRLPLAVALLAACCAGEALVQLSLGVGDGRLLSLPAAGVLLSCLGGATWLVLRLRLGVLMVAWTSVLRTVALVSLERFKVAWRPYLAYLAAVLGLLLARYAEQILPQCSGPAPPRERFGSQLSARTKEEIPGWKRRRRSSSVVAGEMSGCSGKSHRRTSLPCIPREQLMGHSEWDHKRGPRGSQSGTSITVDIAVMGEAHGLITDLLADPSLPPNVCTSLRAVSNLLSTQLTFQAIHKPRVNPTVTFSENYTCSDSEEGLEKDKQAISKRLRRSLPPGLLRRVSSTWTTTTSATGLPTLEPAPVRRDRSASIKPHEAPSPSAVNPDSWNAPGLTTLTKSRSFTSSYAVSAANHVKAKKQNRPGGLAKISPVPSPSSSPPQGSPASSPVSNSASQQFPESPEVTIKRGPGSHRALTYTQSAPDLSPQIPPPSVICSSCGRPYSQGNPADGPSERSGPAMLKPNRTDDTSQVTSDYETNNNSDSSDILQNEEEAECQREPQRKASACGTYTSQTMIFLDKPILAPEPLVMDNLDSIMDQLNTWNFPIFDLMENIGRKCGRILSQVSYRLFEDMGLFEAFKIPVREFMNYFHALEIGYRDIPYHNRIHATDVLHAVWYLTTQPIPGLPSVIGDHGSASDSDSDSGFTHGHMGYVFSKMYHVPDDKYGCLSGNIPALELMALYVAAAMHDYDHPGRTNAFLVATSAPQAVLYNDRSVLENHHAAAAWNLFMSRPEYNFLVNLDHVEFKHFRFLVIEAILATDLKKHFDFVAKFNAKVNDDVGIDWTNENDRLLVCQMCIKLADINGPAKCKELHLRWTEGIASEFYEQGDEEASLGLPISPFMDRSAPQLANLQESFISHIVGPLCHSYDSAGLMPGKWVDDSDDSGDTDDPEEEEEEAETPHEDEACESSIAPRKKSFKRRRIYCQITQHLLQNHMMWKKVIEEEQCLSGTENQSLDQVPLQHPSEQIQAIKEEEEEKGKPRAEETLAPQPDL.

The interval 1–42 (MAVRGEAAQDLAKPGLGGASPARVARGNHRHRGESSPSPRGS) is disordered. Residues 62–82 (SALCAGSLSVLLALLVRLVGG) form a helical membrane-spanning segment. Positions 90–111 (KSQEAAAEEEEEEGARGGVFPG) are disordered. A run of 5 helical transmembrane segments spans residues 127 to 147 (LQPA…GLCL), 157 to 177 (AVAL…SLGV), 182 to 202 (LLSL…TWLV), 207 to 227 (LGVL…VSLE), and 229 to 249 (FKVA…LLLA). The residue at position 310 (Ser310) is a Phosphoserine. Positions 433–445 (RVSSTWTTTTSAT) are enriched in low complexity. The tract at residues 433 to 483 (RVSSTWTTTTSATGLPTLEPAPVRRDRSASIKPHEAPSPSAVNPDSWNAPG) is disordered. Over residues 454-467 (PVRRDRSASIKPHE) the composition is skewed to basic and acidic residues. Residues 472 to 483 (SAVNPDSWNAPG) show a composition bias toward polar residues. Residues Ser492, Ser520, Ser524, and Ser533 each carry the phosphoserine modification. The interval 505–654 (VKAKKQNRPG…CQREPQRKAS (150 aa)) is disordered. Residues 522–532 (VPSPSSSPPQG) are compositionally biased toward pro residues. A compositionally biased stretch (low complexity) spans 533–544 (SPASSPVSNSAS). The span at 618 to 637 (TSQVTSDYETNNNSDSSDIL) shows a compositional bias: polar residues. The interval 669 to 1141 (KPILAPEPLV…EETLAPQPDL (473 aa)) is interaction with SLFN12. Positions 674-1093 (PEPLVMDNLD…MMWKKVIEEE (420 aa)) constitute a PDEase domain. His752 (proton donor) is an active-site residue. His752 is a binding site for AMP. Mn(2+) contacts are provided by His756, His836, Asp837, and Asp950. AMP-binding residues include Asp837, Asp950, and Gln1001. Asp837 contacts Mg(2+). Disordered regions lie at residues 1024–1060 (GKWV…SSIA) and 1120–1141 (KEEE…QPDL). The segment covering 1029–1046 (DSDDSGDTDDPEEEEEEA) has biased composition (acidic residues). Position 1033 is a phosphoserine (Ser1033). Thr1036 carries the post-translational modification Phosphothreonine. Lys1120 is covalently cross-linked (Glycyl lysine isopeptide (Lys-Gly) (interchain with G-Cter in SUMO2)).

This sequence belongs to the cyclic nucleotide phosphodiesterase family. PDE3 subfamily. It depends on Mn(2+) as a cofactor. Mg(2+) serves as cofactor.

It is found in the membrane. The protein localises to the cytoplasm. Its subcellular location is the cytosol. It carries out the reaction a nucleoside 3',5'-cyclic phosphate + H2O = a nucleoside 5'-phosphate + H(+). It catalyses the reaction 3',5'-cyclic AMP + H2O = AMP + H(+). The catalysed reaction is 3',5'-cyclic GMP + H2O = GMP + H(+). The enzyme catalyses 3',5'-cyclic UMP + H2O = UMP + H(+). Inhibited by cGMP. Cyclic nucleotide phosphodiesterase with specificity for the second messengers cAMP and cGMP, which are key regulators of many important physiological processes. Also has activity toward cUMP. Independently of its catalytic activity it is part of an E2/17beta-estradiol-induced pro-apoptotic signaling pathway. E2 stabilizes the PDE3A/SLFN12 complex in the cytosol, promoting the dephosphorylation of SLFN12 and activating its pro-apoptotic ribosomal RNA/rRNA ribonuclease activity. This apoptotic pathway might be relevant in tissues with high concentration of E2 and be for instance involved in placenta remodeling. The protein is cGMP-inhibited 3',5'-cyclic phosphodiesterase 3A of Mus musculus (Mouse).